A 531-amino-acid chain; its full sequence is Probable protein phosphatase 2C 66 (531 aa).

The interval 1–47 (MGSCLSSDLPPRAGAGAGASPGWPQRWRRRRQRGVERGGAVSGGGGG) is disordered. A compositionally biased stretch (low complexity) spans 10-25 (PPRAGAGAGASPGWPQ). The PPM-type phosphatase domain maps to 88–401 (AACLHTQQGR…DDCAVVCLFL (314 aa)). Positions 123 and 124 each coordinate Mn(2+). Residues 151-172 (SANEDTSSHQNGSISGSVNSEE) are compositionally biased toward polar residues. Residues 151-176 (SANEDTSSHQNGSISGSVNSEESPVV) form a disordered region. Mn(2+) contacts are provided by aspartate 346 and aspartate 392.

The protein belongs to the PP2C family. The cofactor is Mg(2+). Mn(2+) serves as cofactor.

The enzyme catalyses O-phospho-L-seryl-[protein] + H2O = L-seryl-[protein] + phosphate. It carries out the reaction O-phospho-L-threonyl-[protein] + H2O = L-threonyl-[protein] + phosphate. The sequence is that of Probable protein phosphatase 2C 66 from Oryza sativa subsp. japonica (Rice).